The primary structure comprises 103 residues: Large ribosomal subunit protein bL21 (103 aa).

Belongs to the bacterial ribosomal protein bL21 family. As to quaternary structure, part of the 50S ribosomal subunit. Contacts protein L20.

This protein binds to 23S rRNA in the presence of protein L20. The protein is Large ribosomal subunit protein bL21 of Desulforapulum autotrophicum (strain ATCC 43914 / DSM 3382 / VKM B-1955 / HRM2) (Desulfobacterium autotrophicum).